Consider the following 438-residue polypeptide: 26S proteasome regulatory subunit 7 homolog (438 aa).

Positions 1–15 are enriched in basic and acidic residues; it reads MPPKEDWEKYQKPVD. The tract at residues 1 to 31 is disordered; that stretch reads MPPKEDWEKYQKPVDTEEENDKNPPPLDEGD. Position 90 is a phosphoserine (S90). Residue 220-227 coordinates ATP; the sequence is GPPGTGKT.

It belongs to the AAA ATPase family.

The protein localises to the cytoplasm. The protein resides in the nucleus. Functionally, the 26S proteasome is involved in the ATP-dependent degradation of ubiquitinated proteins. The regulatory (or ATPase) complex confers ATP dependency and substrate specificity to the 26S complex. This chain is 26S proteasome regulatory subunit 7 homolog (rpt1), found in Schizosaccharomyces pombe (strain 972 / ATCC 24843) (Fission yeast).